The following is a 329-amino-acid chain: Malate dehydrogenase (329 aa).

Position 12 to 18 (12 to 18 (GAAGQIG)) interacts with NAD(+). Residues R95 and R101 each coordinate substrate. NAD(+) contacts are provided by residues N108, Q115, and 132–134 (VGN). Residues N134 and R165 each contribute to the substrate site. The Proton acceptor role is filled by H190.

It belongs to the LDH/MDH superfamily. MDH type 2 family.

The catalysed reaction is (S)-malate + NAD(+) = oxaloacetate + NADH + H(+). In terms of biological role, catalyzes the reversible oxidation of malate to oxaloacetate. The chain is Malate dehydrogenase from Herminiimonas arsenicoxydans.